We begin with the raw amino-acid sequence, 513 residues long: ATP synthase subunit alpha (513 aa).

169-176 (GDRQCGKT) provides a ligand contact to ATP.

The protein belongs to the ATPase alpha/beta chains family. F-type ATPases have 2 components, CF(1) - the catalytic core - and CF(0) - the membrane proton channel. CF(1) has five subunits: alpha(3), beta(3), gamma(1), delta(1), epsilon(1). CF(0) has three main subunits: a(1), b(2) and c(9-12). The alpha and beta chains form an alternating ring which encloses part of the gamma chain. CF(1) is attached to CF(0) by a central stalk formed by the gamma and epsilon chains, while a peripheral stalk is formed by the delta and b chains.

Its subcellular location is the cell inner membrane. It carries out the reaction ATP + H2O + 4 H(+)(in) = ADP + phosphate + 5 H(+)(out). Its function is as follows. Produces ATP from ADP in the presence of a proton gradient across the membrane. The alpha chain is a regulatory subunit. This Alteromonas mediterranea (strain DSM 17117 / CIP 110805 / LMG 28347 / Deep ecotype) protein is ATP synthase subunit alpha.